The sequence spans 446 residues: Glutamyl-tRNA reductase (446 aa).

Residues 49–52, Ser109, 114–116, and Gln120 contribute to the substrate site; these read TCNR and ETQ. The active-site Nucleophile is the Cys50. An NADP(+)-binding site is contributed by 189–194; it reads GAGEMA.

It belongs to the glutamyl-tRNA reductase family. As to quaternary structure, homodimer.

The catalysed reaction is (S)-4-amino-5-oxopentanoate + tRNA(Glu) + NADP(+) = L-glutamyl-tRNA(Glu) + NADPH + H(+). The protein operates within porphyrin-containing compound metabolism; protoporphyrin-IX biosynthesis; 5-aminolevulinate from L-glutamyl-tRNA(Glu): step 1/2. Catalyzes the NADPH-dependent reduction of glutamyl-tRNA(Glu) to glutamate 1-semialdehyde (GSA). This is Glutamyl-tRNA reductase from Macrococcus caseolyticus (strain JCSC5402) (Macrococcoides caseolyticum).